The following is a 152-amino-acid chain: Transcriptional regulator MraZ (152 aa).

SpoVT-AbrB domains follow at residues 5-52 (ASAI…PIHE) and 81-124 (AHEV…DEQS).

The protein belongs to the MraZ family. Forms oligomers.

It localises to the cytoplasm. Its subcellular location is the nucleoid. This is Transcriptional regulator MraZ from Shewanella baltica (strain OS223).